A 177-amino-acid chain; its full sequence is Thymidine kinase (177 aa).

11-18 is a binding site for ATP; that stretch reads GPMFSGKS. Catalysis depends on glutamate 83, which acts as the Proton acceptor. Phenylalanine 113 provides a ligand contact to substrate. The Zn(2+) site is built by cysteine 138 and cysteine 141. Substrate is bound at residue 157-161; sequence IEIIG. Zn(2+)-binding residues include cysteine 170 and cysteine 173.

The protein belongs to the thymidine kinase family. As to quaternary structure, homotetramer. Two molecules of substrate bind to each enzyme tetramer.

It catalyses the reaction thymidine + ATP = dTMP + ADP + H(+). Its function is as follows. Phosphorylates thymidine and thymidine analogs, such as azidothymidine (AZT). Part of the salvage pathway for pyrimidine deoxyribonucleotide synthesis. The polypeptide is Thymidine kinase (OPG101) (Vaccinia virus (strain Copenhagen) (VACV)).